The sequence spans 425 residues: Elongation factor 1-alpha (425 aa).

The tr-type G domain maps to lysine 5–threonine 221. The segment at glycine 14–serine 21 is G1. Glycine 14 to serine 21 lines the GTP pocket. Mg(2+) is bound at residue serine 21. The interval glycine 70–aspartate 74 is G2. The G3 stretch occupies residues aspartate 91–glycine 94. GTP is bound by residues aspartate 91–histidine 95 and asparagine 146–aspartate 149. Residues asparagine 146–aspartate 149 form a G4 region. The G5 stretch occupies residues serine 185–phenylalanine 187.

This sequence belongs to the TRAFAC class translation factor GTPase superfamily. Classic translation factor GTPase family. EF-Tu/EF-1A subfamily.

It localises to the cytoplasm. The catalysed reaction is GTP + H2O = GDP + phosphate + H(+). In terms of biological role, GTP hydrolase that promotes the GTP-dependent binding of aminoacyl-tRNA to the A-site of ribosomes during protein biosynthesis. This is Elongation factor 1-alpha from Methanospirillum hungatei JF-1 (strain ATCC 27890 / DSM 864 / NBRC 100397 / JF-1).